The following is a 386-amino-acid chain: MNIHEYQAKEILRKYGVPTSTGLVVTQTEKINETIDKLNTEVYVVKAQIHAGGRGKAGGVKVVKSKEEAKKVAHDMFGINLVTHQTGPQGQKVNRLYIESGCDILKEYYFSIVFDRSASCITFIASTEGGVDIEEVAEKTPEKIIKFSVDPATGLQDFHMRGIAYELGFKDNQAKQMKEIVKSVYNAFIETDAAQIEINPLIVNSDGHLLALDAKITFDDNGLLRHPNITAMRDHDEEDPLETRAANAGLSYVKMDGNIGCMVNGAGLAMATMDIIKLYGASPANFLDVGGGADRERVKEALKIILSDKEVQGILVNIFGGIMRCDIIAEGIIAAAKDIGIKVPLVVRLAGTNVEKGEEILSNSGLEIIPAHDLADAANKIVEAIR.

In terms of domain architecture, ATP-grasp spans 9–244 (KEILRKYGVP…HDEEDPLETR (236 aa)). ATP contacts are provided by residues K46, 53–55 (GRG), E99, C102, and E107. Residues N199 and D213 each coordinate Mg(2+). Substrate contacts are provided by residues N264 and 321-323 (GIM).

It belongs to the succinate/malate CoA ligase beta subunit family. Heterotetramer of two alpha and two beta subunits. The cofactor is Mg(2+).

The catalysed reaction is succinate + ATP + CoA = succinyl-CoA + ADP + phosphate. It catalyses the reaction GTP + succinate + CoA = succinyl-CoA + GDP + phosphate. It participates in carbohydrate metabolism; tricarboxylic acid cycle; succinate from succinyl-CoA (ligase route): step 1/1. Its function is as follows. Succinyl-CoA synthetase functions in the citric acid cycle (TCA), coupling the hydrolysis of succinyl-CoA to the synthesis of either ATP or GTP and thus represents the only step of substrate-level phosphorylation in the TCA. The beta subunit provides nucleotide specificity of the enzyme and binds the substrate succinate, while the binding sites for coenzyme A and phosphate are found in the alpha subunit. This Rickettsia peacockii (strain Rustic) protein is Succinate--CoA ligase [ADP-forming] subunit beta.